The following is a 192-amino-acid chain: Adenylate kinase (192 aa).

12–17 (GSGKTT) contributes to the ATP binding site. The tract at residues 34-63 (STGDLLRAEVASGSELGKTIDSFISKGNLV) is NMP. AMP-binding positions include threonine 35, arginine 40, 61–63 (NLV), 88–91 (GYPR), and glutamine 95. The interval 130-136 (GRNRGAD) is LID. An ATP-binding site is contributed by arginine 131. AMP contacts are provided by arginine 133 and arginine 145. Arginine 173 contacts ATP.

The protein belongs to the adenylate kinase family. In terms of assembly, monomer.

It is found in the cytoplasm. The catalysed reaction is AMP + ATP = 2 ADP. Its pathway is purine metabolism; AMP biosynthesis via salvage pathway; AMP from ADP: step 1/1. Its function is as follows. Catalyzes the reversible transfer of the terminal phosphate group between ATP and AMP. Plays an important role in cellular energy homeostasis and in adenine nucleotide metabolism. This chain is Adenylate kinase, found in Campylobacter jejuni subsp. jejuni serotype O:6 (strain 81116 / NCTC 11828).